The primary structure comprises 536 residues: Glutamate--tRNA ligase, mitochondrial (536 aa).

48 to 50 serves as a coordination point for L-glutamate; it reads RFA. The short motif at 53–61 is the 'HIGH' region element; it reads PTGFLHLGS. His58 contributes to the ATP binding site. L-glutamate-binding positions include Glu84, 235–239, and Arg253; that span reads YHLAN. ATP-binding positions include Glu256 and 291 to 295; that span reads KLSKR. The 'KMSKS' region motif lies at 291–295; that stretch reads KLSKR.

It belongs to the class-I aminoacyl-tRNA synthetase family. Glutamate--tRNA ligase type 1 subfamily.

Its subcellular location is the mitochondrion matrix. The enzyme catalyses tRNA(Glu) + L-glutamate + ATP = L-glutamyl-tRNA(Glu) + AMP + diphosphate. Catalyzes the attachment of glutamate to tRNA(Glu) in a two-step reaction: glutamate is first activated by ATP to form Glu-AMP and then transferred to the acceptor end of tRNA(Glu). The polypeptide is Glutamate--tRNA ligase, mitochondrial (MSE1) (Saccharomyces cerevisiae (strain ATCC 204508 / S288c) (Baker's yeast)).